The sequence spans 949 residues: Glycine dehydrogenase (decarboxylating) (949 aa).

Position 700 is an N6-(pyridoxal phosphate)lysine (K700).

This sequence belongs to the GcvP family. As to quaternary structure, the glycine cleavage system is composed of four proteins: P, T, L and H. It depends on pyridoxal 5'-phosphate as a cofactor.

It carries out the reaction N(6)-[(R)-lipoyl]-L-lysyl-[glycine-cleavage complex H protein] + glycine + H(+) = N(6)-[(R)-S(8)-aminomethyldihydrolipoyl]-L-lysyl-[glycine-cleavage complex H protein] + CO2. Its function is as follows. The glycine cleavage system catalyzes the degradation of glycine. The P protein binds the alpha-amino group of glycine through its pyridoxal phosphate cofactor; CO(2) is released and the remaining methylamine moiety is then transferred to the lipoamide cofactor of the H protein. In Christiangramia forsetii (strain DSM 17595 / CGMCC 1.15422 / KT0803) (Gramella forsetii), this protein is Glycine dehydrogenase (decarboxylating).